The sequence spans 421 residues: Lipid II:glycine glycyltransferase (421 aa).

This sequence belongs to the FemABX family. In terms of assembly, monomer.

The protein localises to the cytoplasm. It carries out the reaction beta-D-GlcNAc-(1-&gt;4)-Mur2Ac(oyl-L-Ala-D-isoglutaminyl-L-Lys-D-Ala-D-Ala)-di-trans,octa-cis-undecaprenyl diphosphate + glycyl-tRNA(Gly) = beta-D-GlcNAc-(1-&gt;4)-Mur2Ac(oyl-L-Ala-D-isoglutaminyl-L-Lys-(N(6)-Gly)-D-Ala-D-Ala)-di-trans,octa-cis-undecaprenyl diphosphate + tRNA(Gly) + H(+). Catalyzes the incorporation of the first glycine of the pentaglycine interpeptide bridge, which is characteristic of the S.aureus peptidoglycan. This glycine is added to the epsilon-amino group of the L-lysine of the membrane-bound lipid II intermediate (GlcNAc-(beta-1,4)-N-acetylmuramic acid(-L-Ala-D-iGln-L-Lys-D-Ala-D-Ala)-pyrophosphoryl-undecaprenol), using glycyl-tRNA(Gly) as donor, in a ribosome-independent mechanism. Involved in methicillin resistance. The polypeptide is Lipid II:glycine glycyltransferase (femX) (Staphylococcus aureus (strain COL)).